The sequence spans 347 residues: Putative adhesin P1-like protein MPN_099 (347 aa).

The segment covering 282–300 has biased composition (polar residues); it reads FGTDHSTQPQPQSLKTTTP. Positions 282-302 are disordered; the sequence is FGTDHSTQPQPQSLKTTTPVF.

The protein belongs to the adhesin P1 family.

The protein is Putative adhesin P1-like protein MPN_099 of Mycoplasma pneumoniae (strain ATCC 29342 / M129 / Subtype 1) (Mycoplasmoides pneumoniae).